Reading from the N-terminus, the 297-residue chain is N-acetylneuraminate lyase (297 aa).

Positions 47 and 48 each coordinate aceneuramate. The Proton donor role is filled by Y137. K165 (schiff-base intermediate with substrate) is an active-site residue. Aceneuramate-binding residues include T167, G189, D191, E192, and S208.

This sequence belongs to the DapA family. NanA subfamily. Homotetramer.

Its subcellular location is the cytoplasm. It catalyses the reaction aceneuramate = aldehydo-N-acetyl-D-mannosamine + pyruvate. The protein operates within amino-sugar metabolism; N-acetylneuraminate degradation; D-fructose 6-phosphate from N-acetylneuraminate: step 1/5. Catalyzes the reversible aldol cleavage of N-acetylneuraminic acid (sialic acid; Neu5Ac) to form pyruvate and N-acetylmannosamine (ManNAc) via a Schiff base intermediate. The chain is N-acetylneuraminate lyase from Salmonella typhimurium (strain LT2 / SGSC1412 / ATCC 700720).